The primary structure comprises 154 residues: Ribosome maturation factor RimP (154 aa).

It belongs to the RimP family.

It localises to the cytoplasm. In terms of biological role, required for maturation of 30S ribosomal subunits. The polypeptide is Ribosome maturation factor RimP (Salmonella agona (strain SL483)).